The primary structure comprises 316 residues: Beta-lactamase 3 (316 aa).

An N-terminal signal peptide occupies residues 1-29 (MFVLNKFFTNSHYKKIVPVVLLSCATLIG). Residue Cys-30 is the site of N-palmitoyl cysteine attachment. Cys-30 is lipidated: S-diacylglycerol cysteine. Positions 34–53 (NTQSESNKQTNQTNQVKQEN) are disordered. Over residues 40-50 (NKQTNQTNQVK) the composition is skewed to low complexity. Ser-95 serves as the catalytic Acyl-ester intermediate. The active-site Proton acceptor is Glu-191. Position 257–259 (257–259 (KTG)) interacts with substrate.

This sequence belongs to the class-A beta-lactamase family.

Its subcellular location is the cell membrane. It catalyses the reaction a beta-lactam + H2O = a substituted beta-amino acid. In Bacillus cereus, this protein is Beta-lactamase 3 (blaZ).